The chain runs to 469 residues: Neuraminidase (469 aa).

Over 1–9 (MNPNQKIIT) the chain is Intravirion. A helical transmembrane segment spans residues 10-30 (IGSVSLTIATICFLMQIAILV). An involved in apical transport and lipid raft association region spans residues 11-33 (GSVSLTIATICFLMQIAILVTTV). The Virion surface portion of the chain corresponds to 31-469 (TTVTLHFKQY…DGADINLMPI (439 aa)). The segment at 36–88 (HFKQYECSSPPNNQVMPCEPIIIERNITEIVYLTNTTIEKEICPKLVEYRNWS) is hypervariable stalk region. Residues Asn-61, Asn-70, and Asn-86 are each glycosylated (N-linked (GlcNAc...) asparagine; by host). The head of neuraminidase stretch occupies residues 91 to 469 (QCKITGFAPF…DGADINLMPI (379 aa)). Cystine bridges form between Cys-92–Cys-417, Cys-124–Cys-129, Cys-183–Cys-230, Cys-232–Cys-237, Cys-278–Cys-291, Cys-280–Cys-289, Cys-318–Cys-337, and Cys-421–Cys-447. Arg-118 serves as a coordination point for substrate. Asn-146 carries an N-linked (GlcNAc...) asparagine; by host glycan. Asp-151 (proton donor/acceptor) is an active-site residue. Arg-152 is a substrate binding site. N-linked (GlcNAc...) asparagine; by host glycans are attached at residues Asn-200 and Asn-234. 276–277 (EE) provides a ligand contact to substrate. Arg-292 is a binding site for substrate. Ca(2+) is bound by residues Asp-293, Gly-297, and Asp-324. Arg-371 provides a ligand contact to substrate. Residue Asn-402 is glycosylated (N-linked (GlcNAc...) asparagine; by host). Tyr-406 functions as the Nucleophile in the catalytic mechanism.

It belongs to the glycosyl hydrolase 34 family. In terms of assembly, homotetramer. Ca(2+) is required as a cofactor. Post-translationally, N-glycosylated.

It is found in the virion membrane. It localises to the host apical cell membrane. It carries out the reaction Hydrolysis of alpha-(2-&gt;3)-, alpha-(2-&gt;6)-, alpha-(2-&gt;8)- glycosidic linkages of terminal sialic acid residues in oligosaccharides, glycoproteins, glycolipids, colominic acid and synthetic substrates.. Inhibited by the neuraminidase inhibitors zanamivir (Relenza) and oseltamivir (Tamiflu). These drugs interfere with the release of progeny virus from infected cells and are effective against all influenza strains. Resistance to neuraminidase inhibitors is quite rare. In terms of biological role, catalyzes the removal of terminal sialic acid residues from viral and cellular glycoconjugates. Cleaves off the terminal sialic acids on the glycosylated HA during virus budding to facilitate virus release. Additionally helps virus spread through the circulation by further removing sialic acids from the cell surface. These cleavages prevent self-aggregation and ensure the efficient spread of the progeny virus from cell to cell. Otherwise, infection would be limited to one round of replication. Described as a receptor-destroying enzyme because it cleaves a terminal sialic acid from the cellular receptors. May facilitate viral invasion of the upper airways by cleaving the sialic acid moieties on the mucin of the airway epithelial cells. Likely to plays a role in the budding process through its association with lipid rafts during intracellular transport. May additionally display a raft-association independent effect on budding. Plays a role in the determination of host range restriction on replication and virulence. Sialidase activity in late endosome/lysosome traffic seems to enhance virus replication. The protein is Neuraminidase of Influenza A virus (strain A/Memphis/4/1980 H3N2).